We begin with the raw amino-acid sequence, 938 residues long: TFIIH basal transcription factor complex helicase/translocase XPB subunit (938 aa).

The Helicase ATP-binding domain occupies 394–562 (FRSGNKAHQG…DLRHLVGPKL (169 aa)). Position 407 to 414 (407 to 414 (LPCGAGKT)) interacts with ATP. The DEVH box signature appears at 515–518 (DEVH). One can recognise a Helicase C-terminal domain in the interval 627-781 (WCTQALLEFH…SYRVLQSDMV (155 aa)).

This sequence belongs to the helicase family. RAD25/XPB subfamily. Component of the 7-subunit TFIIH core complex composed of XPB, XPD, SSL1, TFB1, TFB2, TFB4 and TFB5.

It catalyses the reaction Couples ATP hydrolysis with the unwinding of duplex DNA by translocating in the 3'-5' direction.. It carries out the reaction ATP + H2O = ADP + phosphate + H(+). In terms of biological role, ATP-dependent 3'-5' DNA helicase/translocase; binds dsDNA rather than ssDNA, unzipping it in a translocase rather than classical helicase activity. Component of the general transcription factor IIH (TFIIH) core complex, involved in spliced leader RNA (SL RNA) gene transcription by RNA polymerase II. TFIIH has an essential role in transcription initiation. When the pre-initiation complex (PIC) has been established, TFIIH is required for promoter opening and promoter escape. The ATPase activity of XPB is required for promoter opening and promoter escape. The polypeptide is TFIIH basal transcription factor complex helicase/translocase XPB subunit (Trypanosoma brucei brucei (strain 927/4 GUTat10.1)).